Consider the following 339-residue polypeptide: D-erythrose-4-phosphate dehydrogenase (339 aa).

Residues Arg12–Ile13 and Arg81 contribute to the NAD(+) site. Substrate is bound by residues Ser154–Thr156, Arg200, Thr213–Lys214, and Arg236. The active-site Nucleophile is the Cys155. Residue Asn318 participates in NAD(+) binding.

Belongs to the glyceraldehyde-3-phosphate dehydrogenase family. Epd subfamily. As to quaternary structure, homotetramer.

The protein resides in the cytoplasm. The catalysed reaction is D-erythrose 4-phosphate + NAD(+) + H2O = 4-phospho-D-erythronate + NADH + 2 H(+). It functions in the pathway cofactor biosynthesis; pyridoxine 5'-phosphate biosynthesis; pyridoxine 5'-phosphate from D-erythrose 4-phosphate: step 1/5. Its function is as follows. Catalyzes the NAD-dependent conversion of D-erythrose 4-phosphate to 4-phosphoerythronate. The polypeptide is D-erythrose-4-phosphate dehydrogenase (Shigella dysenteriae serotype 1 (strain Sd197)).